A 650-amino-acid polypeptide reads, in one-letter code: Chaperone protein DnaK (650 aa).

Phosphothreonine; by autocatalysis is present on threonine 200. Over residues 611–636 (AQQAGAAGAAGAAEGAAHAGGAQQAA) the composition is skewed to low complexity. A disordered region spans residues 611 to 637 (AQQAGAAGAAGAAEGAAHAGGAQQAAD).

It belongs to the heat shock protein 70 family.

In terms of biological role, acts as a chaperone. This chain is Chaperone protein DnaK, found in Burkholderia ambifaria (strain MC40-6).